The following is a 610-amino-acid chain: UvrABC system protein C (610 aa).

The GIY-YIG domain occupies 16 to 94 (SQPGVYRMYD…IKLYQPRYNV (79 aa)). Residues 204 to 239 (DQVLTQLISRMETASQNLEFEEAARIRDQIQAVRRV) form the UVR domain.

It belongs to the UvrC family. In terms of assembly, interacts with UvrB in an incision complex.

It localises to the cytoplasm. Functionally, the UvrABC repair system catalyzes the recognition and processing of DNA lesions. UvrC both incises the 5' and 3' sides of the lesion. The N-terminal half is responsible for the 3' incision and the C-terminal half is responsible for the 5' incision. The polypeptide is UvrABC system protein C (Shigella boydii serotype 18 (strain CDC 3083-94 / BS512)).